Reading from the N-terminus, the 226-residue chain is MGHKVHPTGFRLGVTEDWRSMWYAGSSNFGEYLNTDLQVRNFIRKKLAHASVSRIRIERPAKNALVTIHTARPGIVIGKKGEDIDRLRGEVARLMGVPVHINIEEIRKPELDAKLVAESVAQQLERRIMFRRAMKRAVGNAMRLGAQGIKVHVSGRLNGAEIARSEWYREGRVPLHTLRANIDYGVAEAHTTYGVIGVKVWVFKGEIIDSDAQPAAGGEGARQGKG.

One can recognise a KH type-2 domain in the interval 39–107 (VRNFIRKKLA…PVHINIEEIR (69 aa)).

The protein belongs to the universal ribosomal protein uS3 family. As to quaternary structure, part of the 30S ribosomal subunit. Forms a tight complex with proteins S10 and S14.

In terms of biological role, binds the lower part of the 30S subunit head. Binds mRNA in the 70S ribosome, positioning it for translation. This chain is Small ribosomal subunit protein uS3, found in Alkalilimnicola ehrlichii (strain ATCC BAA-1101 / DSM 17681 / MLHE-1).